A 142-amino-acid chain; its full sequence is Transcription antitermination protein NusB (142 aa).

Belongs to the NusB family.

Its function is as follows. Involved in transcription antitermination. Required for transcription of ribosomal RNA (rRNA) genes. Binds specifically to the boxA antiterminator sequence of the ribosomal RNA (rrn) operons. The protein is Transcription antitermination protein NusB of Latilactobacillus sakei subsp. sakei (strain 23K) (Lactobacillus sakei subsp. sakei).